We begin with the raw amino-acid sequence, 353 residues long: MSGNTLGTLFCVTNFGESHGPAIGCVVDGCPPGLPLEAADIQAELDRRRPGTSRHVTQRQEADQVEILSGVYEGVTTGTPIGLLIRNTDARSKDYSNIADTFRPGHADFAYWRKYGVRDPRGGGRSSARLTAPTVAAGAIAKKWLAGQFGVRVRGYMSQLGPIAIPFSSWDDVPGNAFYAPNAAVVPELEAYMDQLRRDGDSVGARIEVVAEGLPAGWGEPIYDRLDADIAHAMMGLNAVKGVSLGAGFESIAQRGSEHGGEITPEGFASNHAGGVLGGISTGQPITVSLAIKPTSSIRVERRSVNRAGEPVMVQTLGRHDPCVGIRATPIAEALLALVLIDHALRQRAQCGG.

R48 and R54 together coordinate NADP(+). Residues 125–127 (RSS), 238–239 (NA), G278, 293–297 (KPTSS), and R319 contribute to the FMN site.

It belongs to the chorismate synthase family. In terms of assembly, homotetramer. FMNH2 serves as cofactor.

The catalysed reaction is 5-O-(1-carboxyvinyl)-3-phosphoshikimate = chorismate + phosphate. It functions in the pathway metabolic intermediate biosynthesis; chorismate biosynthesis; chorismate from D-erythrose 4-phosphate and phosphoenolpyruvate: step 7/7. In terms of biological role, catalyzes the anti-1,4-elimination of the C-3 phosphate and the C-6 proR hydrogen from 5-enolpyruvylshikimate-3-phosphate (EPSP) to yield chorismate, which is the branch point compound that serves as the starting substrate for the three terminal pathways of aromatic amino acid biosynthesis. This reaction introduces a second double bond into the aromatic ring system. This chain is Chorismate synthase, found in Bordetella parapertussis (strain 12822 / ATCC BAA-587 / NCTC 13253).